Here is a 168-residue protein sequence, read N- to C-terminus: Phosphopantetheine adenylyltransferase (168 aa).

Threonine 14 contributes to the substrate binding site. Residues 14-15 (TF) and histidine 22 contribute to the ATP site. Substrate is bound by residues lysine 46, leucine 78, and arginine 92. ATP-binding positions include 93 to 95 (GLR), glutamate 103, and 128 to 134 (YSFISSS).

It belongs to the bacterial CoaD family. In terms of assembly, homohexamer. The cofactor is Mg(2+).

It is found in the cytoplasm. The catalysed reaction is (R)-4'-phosphopantetheine + ATP + H(+) = 3'-dephospho-CoA + diphosphate. It participates in cofactor biosynthesis; coenzyme A biosynthesis; CoA from (R)-pantothenate: step 4/5. Functionally, reversibly transfers an adenylyl group from ATP to 4'-phosphopantetheine, yielding dephospho-CoA (dPCoA) and pyrophosphate. This is Phosphopantetheine adenylyltransferase from Xanthomonas campestris pv. campestris (strain B100).